A 474-amino-acid chain; its full sequence is Phenylalanine--tRNA ligase alpha subunit (474 aa).

L-phenylalanine contacts are provided by residues Thr-317, Gln-356–Glu-358, and Tyr-396. Glu-398 provides a ligand contact to Mg(2+). Position 421 (Phe-421) interacts with L-phenylalanine.

It belongs to the class-II aminoacyl-tRNA synthetase family. Phe-tRNA synthetase alpha subunit type 2 subfamily. Tetramer of two alpha and two beta subunits. Mg(2+) is required as a cofactor.

The protein resides in the cytoplasm. It carries out the reaction tRNA(Phe) + L-phenylalanine + ATP = L-phenylalanyl-tRNA(Phe) + AMP + diphosphate + H(+). This is Phenylalanine--tRNA ligase alpha subunit from Archaeoglobus fulgidus (strain ATCC 49558 / DSM 4304 / JCM 9628 / NBRC 100126 / VC-16).